We begin with the raw amino-acid sequence, 436 residues long: Protein TolB homolog (436 aa).

Positions 1–27 (MRHSIRLTAALLLAFIACFSFPLSAMA) are cleaved as a signal peptide.

This sequence belongs to the TolB family.

Its subcellular location is the periplasm. The polypeptide is Protein TolB homolog (Chlorobium luteolum (strain DSM 273 / BCRC 81028 / 2530) (Pelodictyon luteolum)).